Here is a 494-residue protein sequence, read N- to C-terminus: Solute carrier family 2, facilitated glucose transporter member 3 (494 aa).

At 1 to 10 the chain is on the cytoplasmic side; sequence MGTTKVTTPL. The helical transmembrane segment at 11–32 threads the bilayer; that stretch reads IFAISIATIGSFQFGYNTGVIN. Topologically, residues 33 to 64 are extracellular; sequence APEAIIKDFLNYTLEERSETPPSSVLLTSLWS. N43 carries an N-linked (GlcNAc...) asparagine glycan. Residues 65 to 85 form a helical membrane-spanning segment; it reads LSVAIFSVGGMIGSFSVGLFV. Residues 86-90 are Cytoplasmic-facing; that stretch reads NRFGR. The chain crosses the membrane as a helical span at residues 91 to 111; it reads RNSMLIVNLLAIAGGCLMGFC. Over 112–118 the chain is Extracellular; that stretch reads KIAESVE. The chain crosses the membrane as a helical span at residues 119 to 142; the sequence is MLILGRLIIGLFCGLCTGFVPMYI. Topologically, residues 143-153 are cytoplasmic; that stretch reads GEISPTALRGA. Residues 154–174 traverse the membrane as a helical segment; the sequence is FGTLNQLGIVIGILVAQIFGL. Q159 is a binding site for D-glucose. Residues 175–183 are Extracellular-facing; that stretch reads KVILGTEDL. A helical membrane pass occupies residues 184 to 204; the sequence is WPLLLGFTILPAIIQCAALPF. Residues 205-269 lie on the Cytoplasmic side of the membrane; it reads CPESPRFLLI…LFRAPNYRQP (65 aa). T232 carries the post-translational modification Phosphothreonine. Residues 270 to 290 traverse the membrane as a helical segment; sequence IIISIMLQLSQQLSGINAVFY. The important for selectivity against fructose stretch occupies residues 277–279; it reads QLS. Residues 280–281 and N286 contribute to the D-glucose site; that span reads QQ. At 291 to 304 the chain is on the extracellular side; sequence YSTGIFKDAGVQEP. A helical transmembrane segment spans residues 305–325; the sequence is VYATIGAGVVNTIFTVVSVFL. N315 contributes to the D-glucose binding site. The Cytoplasmic segment spans residues 326–331; that stretch reads VERAGR. Residues 332-352 traverse the membrane as a helical segment; sequence RTLHLIGLGGMAFCSILMTIS. Over 353 to 363 the chain is Extracellular; that stretch reads LLLKDNYSWMS. Residues 364–389 traverse the membrane as a helical segment; the sequence is FICIGAILVFVAFFEIGPGPIPWFIV. 2 residues coordinate D-glucose: E378 and W386. Residues 390–399 lie on the Cytoplasmic side of the membrane; it reads AELFGQGPRP. Residues 400 to 420 traverse the membrane as a helical segment; it reads AAMAVAGCSNWTSNFLVGLLF. The Extracellular segment spans residues 421 to 429; the sequence is PSATFYLGA. A helical membrane pass occupies residues 430-450; the sequence is YVFIVFTVFLVIFWVFTFFKV. At 451 to 494 the chain is on the cytoplasmic side; that stretch reads PETRGRTFEEITRAFEGQVQTGTRGEKGPIMEMNSIQPTKDTNA. The disordered stretch occupies residues 473 to 494; that stretch reads TRGEKGPIMEMNSIQPTKDTNA. The span at 484–494 shows a compositional bias: polar residues; it reads NSIQPTKDTNA. S485 is modified (phosphoserine). Phosphothreonine is present on T492.

Belongs to the major facilitator superfamily. Sugar transporter (TC 2.A.1.1) family. Glucose transporter subfamily. Interacts with SMIM43; the interaction may promote SLC2A3-mediated glucose transport to meet the energy needs of mesendoderm differentiation. In terms of tissue distribution, detected in placenta.

It localises to the cell membrane. The protein localises to the perikaryon. The protein resides in the cell projection. The enzyme catalyses D-glucose(out) = D-glucose(in). It catalyses the reaction D-galactose(in) = D-galactose(out). Its activity is regulated as follows. Deoxyglucose transport is inhibited by D-glucose, D-galactose and maltose. Galactose transport is inhibited by D-glucose and maltose. Its function is as follows. Facilitative glucose transporter. Can also mediate the uptake of various other monosaccharides across the cell membrane. Mediates the uptake of glucose, 2-deoxyglucose, galactose, mannose, xylose and fucose, and probably also dehydroascorbate. Does not mediate fructose transport. Required for mesendoderm differentiation. The chain is Solute carrier family 2, facilitated glucose transporter member 3 from Ovis aries (Sheep).